The chain runs to 555 residues: Myo-inositol transporter 2 (555 aa).

Residues 1-61 (MSSTLDTITP…NLVRAENEDK (61 aa)) are Cytoplasmic-facing. Residues 62-82 (VTPYFMFLISVAAIAGFLFGY) traverse the membrane as a helical segment. Residues 83–108 (DTGIVGAALPMVGTSLGHTLSATESE) lie on the Extracellular side of the membrane. A helical membrane pass occupies residues 109–129 (IITAGTTIGAIFGASILGTMA). The Cytoplasmic portion of the chain corresponds to 130 to 142 (DKLGRKWAMIISD). The helical transmembrane segment at 143–163 (FAFTAGAIIIAASYSVPQIIV) threads the bilayer. Over 164-165 (GR) the chain is Extracellular. Residues 166-186 (LVLGVGVGGAAVIAPLYIAEL) traverse the membrane as a helical segment. Residues 187–200 (APTAVRGRCVGANA) lie on the Cytoplasmic side of the membrane. The chain crosses the membrane as a helical span at residues 201-221 (FCIPFGQVVASAIGAGFQAGV). The Extracellular portion of the chain corresponds to 222–228 (PYHIGWR). Residues 229–249 (VLFGLGVVPSVVQLCLMHFLP) traverse the membrane as a helical segment. At 250 to 328 (ESPRVLVLRG…AIISVSGVQA (79 aa)) the chain is on the cytoplasmic side. The chain crosses the membrane as a helical span at residues 329 to 349 (FGQLTGFNTLLYYSGTIFGLL). Over 350–355 (GLKNGA) the chain is Extracellular. Residues 356-376 (AAGLIPSCLNALFVFIGMSIV) traverse the membrane as a helical segment. Residues 377 to 385 (DKVGRRKLM) are Cytoplasmic-facing. A helical membrane pass occupies residues 386–406 (ITFIPGMMIAFTWTIISFHFL). Over 407 to 427 (TKPTGGLLLKDYQYSTPLVGS) the chain is Extracellular. A helical membrane pass occupies residues 428-448 (VLGSIVLFVIPFGLTYSHIIW). Over 449–461 (YQSEFLPLEIRAA) the chain is Cytoplasmic. Residues 462-482 (GSAISTTACWLANLVVSVAYL) traverse the membrane as a helical segment. Over 483–487 (TQLEK) the chain is Extracellular. The helical transmembrane segment at 488–508 (LGATGTYGLYLGFITIGYIFV) threads the bilayer. Topologically, residues 509–555 (YFCYPETKGLSIDETAEIFIDGFGIEKAHQMLREKRAFAAELYAGRA) are cytoplasmic.

It belongs to the major facilitator superfamily. Sugar transporter (TC 2.A.1.1) family.

The protein resides in the cell membrane. It carries out the reaction myo-inositol(out) + H(+)(out) = myo-inositol(in) + H(+)(in). Transporter for myo-inositol. This is Myo-inositol transporter 2 from Cryptococcus neoformans var. grubii serotype A (strain H99 / ATCC 208821 / CBS 10515 / FGSC 9487) (Filobasidiella neoformans var. grubii).